The sequence spans 401 residues: Tryptophan synthase beta chain (401 aa).

Lys-92 is subject to N6-(pyridoxal phosphate)lysine.

Belongs to the TrpB family. As to quaternary structure, tetramer of two alpha and two beta chains. Requires pyridoxal 5'-phosphate as cofactor.

It carries out the reaction (1S,2R)-1-C-(indol-3-yl)glycerol 3-phosphate + L-serine = D-glyceraldehyde 3-phosphate + L-tryptophan + H2O. It participates in amino-acid biosynthesis; L-tryptophan biosynthesis; L-tryptophan from chorismate: step 5/5. The beta subunit is responsible for the synthesis of L-tryptophan from indole and L-serine. In Vesicomyosocius okutanii subsp. Calyptogena okutanii (strain HA), this protein is Tryptophan synthase beta chain.